The primary structure comprises 238 residues: Ribosomal RNA small subunit methyltransferase G (238 aa).

S-adenosyl-L-methionine is bound by residues G78, F83, 129 to 130, and R148; that span reads AE. Residues 216-238 are disordered; the sequence is EKKKETPKKYPRKAGTPAKNPIK.

The protein belongs to the methyltransferase superfamily. RNA methyltransferase RsmG family.

The protein resides in the cytoplasm. Its function is as follows. Specifically methylates the N7 position of a guanine in 16S rRNA. This is Ribosomal RNA small subunit methyltransferase G from Lactococcus lactis subsp. lactis (strain IL1403) (Streptococcus lactis).